Here is a 236-residue protein sequence, read N- to C-terminus: Ascorbate-specific transmembrane electron transporter 1 (236 aa).

Topologically, residues 1-11 (MGLGLGVRAAP) are cytoplasmic. Residues 12–32 (FTYAAHALAVAAAAMVLVWSI) traverse the membrane as a helical segment. The Cytochrome b561 domain occupies 15-219 (AAHALAVAAA…FGASVVVAAI (205 aa)). Topologically, residues 33–50 (QFRGGLAIESTNKNLIFN) are extracellular. A helical membrane pass occupies residues 51–71 (VHPVLMLIGYVIIGGEAIMVY). H52 is a binding site for heme b. An L-ascorbate-binding site is contributed by 67–75 (AIMVYRVLP). At 72–84 (RVLPTSNHDTTKL) the chain is on the cytoplasmic side. Residues 85–105 (IHLILHGIALVLGAVGIYFAF) traverse the membrane as a helical segment. Heme b contacts are provided by H86 and H120. Topologically, residues 106-122 (KNHNESGIANLYSLHSW) are extracellular. 116-125 (LYSLHSWIGI) contributes to the monodehydro-L-ascorbate radical binding site. The helical transmembrane segment at 123 to 143 (IGIGTITLYGIQWIIGFVTFF) threads the bilayer. Residues 144–153 (FPGAAPNVKK) are Cytoplasmic-facing. Residues 154 to 174 (GVLPWHVLFGLFVYILALANA) form a helical membrane-spanning segment. Heme b is bound at residue H159. At 175–201 (ELGFLEKLTFLESSGLDKYGTEAFLVN) the chain is on the extracellular side. A helical transmembrane segment spans residues 202 to 222 (FTALVVVLFGASVVVAAIAPV). Residues 223–236 (RLEEPQGYDPIPEN) are Cytoplasmic-facing.

The cofactor is heme b.

The protein resides in the membrane. Inhibited by diethylpyrocarbonate. Functionally, two-heme-containing cytochrome. Catalyzes ascorbate-dependent trans-membrane electron transfer by utilizing a concerted H(+)/e(-) transfer mechanism. The chain is Ascorbate-specific transmembrane electron transporter 1 (ZCYB) from Zea mays (Maize).